The sequence spans 434 residues: Serine hydroxymethyltransferase (434 aa).

(6S)-5,6,7,8-tetrahydrofolate contacts are provided by residues L133 and 137–139; that span reads GHL. At K242 the chain carries N6-(pyridoxal phosphate)lysine.

This sequence belongs to the SHMT family. Homodimer. Pyridoxal 5'-phosphate is required as a cofactor.

The protein resides in the cytoplasm. It catalyses the reaction (6R)-5,10-methylene-5,6,7,8-tetrahydrofolate + glycine + H2O = (6S)-5,6,7,8-tetrahydrofolate + L-serine. Its pathway is one-carbon metabolism; tetrahydrofolate interconversion. It functions in the pathway amino-acid biosynthesis; glycine biosynthesis; glycine from L-serine: step 1/1. Functionally, catalyzes the reversible interconversion of serine and glycine with tetrahydrofolate (THF) serving as the one-carbon carrier. This reaction serves as the major source of one-carbon groups required for the biosynthesis of purines, thymidylate, methionine, and other important biomolecules. Also exhibits THF-independent aldolase activity toward beta-hydroxyamino acids, producing glycine and aldehydes, via a retro-aldol mechanism. The polypeptide is Serine hydroxymethyltransferase (Caulobacter sp. (strain K31)).